A 388-amino-acid polypeptide reads, in one-letter code: Acetate kinase (388 aa).

Asparagine 8 is a Mg(2+) binding site. ATP is bound at residue lysine 15. Arginine 88 contributes to the substrate binding site. The active-site Proton donor/acceptor is aspartate 144. Residues 202 to 206, 276 to 278, and 321 to 325 contribute to the ATP site; these read HLGNG, DMR, and GVGEN. Glutamate 375 is a binding site for Mg(2+).

Belongs to the acetokinase family. As to quaternary structure, homodimer. It depends on Mg(2+) as a cofactor. Mn(2+) serves as cofactor.

The protein resides in the cytoplasm. The enzyme catalyses acetate + ATP = acetyl phosphate + ADP. It participates in metabolic intermediate biosynthesis; acetyl-CoA biosynthesis; acetyl-CoA from acetate: step 1/2. Functionally, catalyzes the formation of acetyl phosphate from acetate and ATP. Can also catalyze the reverse reaction. In Mycoplasmoides gallisepticum (strain R(low / passage 15 / clone 2)) (Mycoplasma gallisepticum), this protein is Acetate kinase.